Reading from the N-terminus, the 290-residue chain is ATP synthase gamma chain (290 aa).

This sequence belongs to the ATPase gamma chain family. F-type ATPases have 2 components, CF(1) - the catalytic core - and CF(0) - the membrane proton channel. CF(1) has five subunits: alpha(3), beta(3), gamma(1), delta(1), epsilon(1). CF(0) has three main subunits: a, b and c.

Its subcellular location is the cell inner membrane. In terms of biological role, produces ATP from ADP in the presence of a proton gradient across the membrane. The gamma chain is believed to be important in regulating ATPase activity and the flow of protons through the CF(0) complex. In Delftia acidovorans (strain DSM 14801 / SPH-1), this protein is ATP synthase gamma chain.